Consider the following 758-residue polypeptide: 5-methyltetrahydropteroyltriglutamate--homocysteine methyltransferase (758 aa).

5-methyltetrahydropteroyltri-L-glutamate contacts are provided by residues 16–19 (RELK) and Lys-112. Residues 433-435 (IGS) and Glu-486 contribute to the L-homocysteine site. L-methionine-binding positions include 433–435 (IGS) and Glu-486. Residues 517–518 (RC) and Trp-563 each bind 5-methyltetrahydropteroyltri-L-glutamate. L-homocysteine is bound at residue Asp-601. L-methionine is bound at residue Asp-601. Position 607 (Glu-607) interacts with 5-methyltetrahydropteroyltri-L-glutamate. Zn(2+) is bound by residues His-643, Cys-645, and Glu-667. Catalysis depends on His-696, which acts as the Proton donor. Cys-728 contributes to the Zn(2+) binding site.

This sequence belongs to the vitamin-B12 independent methionine synthase family. Zn(2+) is required as a cofactor.

The catalysed reaction is 5-methyltetrahydropteroyltri-L-glutamate + L-homocysteine = tetrahydropteroyltri-L-glutamate + L-methionine. The protein operates within amino-acid biosynthesis; L-methionine biosynthesis via de novo pathway; L-methionine from L-homocysteine (MetE route): step 1/1. Functionally, catalyzes the transfer of a methyl group from 5-methyltetrahydrofolate to homocysteine resulting in methionine formation. This is 5-methyltetrahydropteroyltriglutamate--homocysteine methyltransferase from Neisseria gonorrhoeae (strain ATCC 700825 / FA 1090).